We begin with the raw amino-acid sequence, 289 residues long: Cell division protein ZipA (289 aa).

Residue M1 is a topological domain, periplasmic. A helical membrane pass occupies residues 2–22; it reads EIGLREWLIVIGIIVIAGILF. The Cytoplasmic segment spans residues 23–289; the sequence is DGWRRMRGSK…ERRALTQRRG (267 aa). The disordered stretch occupies residues 48 to 141; sequence DEEETTSAEV…KPAQRITEDK (94 aa). 3 stretches are compositionally biased toward basic and acidic residues: residues 64–77, 85–106, and 123–141; these read LDTHKEPQLDEHDL, REGKRSNSDKRGNSDKKRKDEP, and GRDDDFPDDKPAQRITEDK.

Belongs to the ZipA family. Interacts with FtsZ via their C-terminal domains.

It localises to the cell inner membrane. Functionally, essential cell division protein that stabilizes the FtsZ protofilaments by cross-linking them and that serves as a cytoplasmic membrane anchor for the Z ring. Also required for the recruitment to the septal ring of downstream cell division proteins. The protein is Cell division protein ZipA of Pseudomonas savastanoi pv. phaseolicola (strain 1448A / Race 6) (Pseudomonas syringae pv. phaseolicola (strain 1448A / Race 6)).